The chain runs to 363 residues: MASGDFCSPGEGMEILQQVCSKQLPPCNLSKEDLLQNPYFSKLLLNLSQHVDESGLSLTLAKEQAQAWKEVRLHKTTWLRSEILHRVIQELLVDYYVKIQDTNVTSEDKKFHETLEQRLLVTELMRLLGPSQEREIPPLLGLEKADLLELMPLSEDFVWMRARLQQEVEEQLKKKCFTLLCYYDPNSDADSETVKAAKVWKLAEVLVGEQQQCQDAKSQQKEQMLLLEKKSAAYSQVLLRCLTLLQRLLQEHRLKTQSELDRINAQYLEVKCGAMILKLRMEELKILSDTYTVEKVEVHRLIRDRLEGAIHLQEQDMENSRQVLNSYEVLGEEFDRLVKEYTVLKQATENKRWALQEFSKVYR.

The protein belongs to the HAUS4 family. Component of the HAUS augmin-like complex. The complex interacts with the gamma-tubulin ring complex and this interaction is required for spindle assembly. Interacts with EML3 (phosphorylated at 'Thr-881').

The protein localises to the cytoplasm. Its subcellular location is the cytoskeleton. It is found in the microtubule organizing center. It localises to the centrosome. The protein resides in the spindle. In terms of biological role, contributes to mitotic spindle assembly, maintenance of centrosome integrity and completion of cytokinesis as part of the HAUS augmin-like complex. This Homo sapiens (Human) protein is HAUS augmin-like complex subunit 4 (HAUS4).